A 451-amino-acid polypeptide reads, in one-letter code: Bifunctional protein GlmU (451 aa).

Positions 1-225 (MSLAVVILAA…EFEIQGVNDR (225 aa)) are pyrophosphorylase. UDP-N-acetyl-alpha-D-glucosamine contacts are provided by residues 8–11 (LAAG), Lys-22, Gln-73, 78–79 (GT), 99–101 (YGD), Gly-135, Glu-150, Asn-165, and Asn-223. Asp-101 serves as a coordination point for Mg(2+). Asn-223 lines the Mg(2+) pocket. The tract at residues 226 to 246 (IQLAQLEREWQKHIAEVIMSK) is linker. Positions 247 to 451 (GVSVADPSRI…IDTWQRPVKK (205 aa)) are N-acetyltransferase. UDP-N-acetyl-alpha-D-glucosamine contacts are provided by Arg-329 and Lys-347. The Proton acceptor role is filled by His-359. Residues Tyr-362 and Asn-373 each contribute to the UDP-N-acetyl-alpha-D-glucosamine site. Residues Ala-376, 382–383 (NY), Ser-401, Ala-419, and Arg-436 contribute to the acetyl-CoA site.

The protein in the N-terminal section; belongs to the N-acetylglucosamine-1-phosphate uridyltransferase family. In the C-terminal section; belongs to the transferase hexapeptide repeat family. Homotrimer. Mg(2+) serves as cofactor.

The protein resides in the cytoplasm. The catalysed reaction is alpha-D-glucosamine 1-phosphate + acetyl-CoA = N-acetyl-alpha-D-glucosamine 1-phosphate + CoA + H(+). It catalyses the reaction N-acetyl-alpha-D-glucosamine 1-phosphate + UTP + H(+) = UDP-N-acetyl-alpha-D-glucosamine + diphosphate. It participates in nucleotide-sugar biosynthesis; UDP-N-acetyl-alpha-D-glucosamine biosynthesis; N-acetyl-alpha-D-glucosamine 1-phosphate from alpha-D-glucosamine 6-phosphate (route II): step 2/2. The protein operates within nucleotide-sugar biosynthesis; UDP-N-acetyl-alpha-D-glucosamine biosynthesis; UDP-N-acetyl-alpha-D-glucosamine from N-acetyl-alpha-D-glucosamine 1-phosphate: step 1/1. It functions in the pathway bacterial outer membrane biogenesis; LPS lipid A biosynthesis. In terms of biological role, catalyzes the last two sequential reactions in the de novo biosynthetic pathway for UDP-N-acetylglucosamine (UDP-GlcNAc). The C-terminal domain catalyzes the transfer of acetyl group from acetyl coenzyme A to glucosamine-1-phosphate (GlcN-1-P) to produce N-acetylglucosamine-1-phosphate (GlcNAc-1-P), which is converted into UDP-GlcNAc by the transfer of uridine 5-monophosphate (from uridine 5-triphosphate), a reaction catalyzed by the N-terminal domain. This chain is Bifunctional protein GlmU, found in Francisella philomiragia subsp. philomiragia (strain ATCC 25017 / CCUG 19701 / FSC 153 / O#319-036).